We begin with the raw amino-acid sequence, 432 residues long: Glutamate-1-semialdehyde 2,1-aminomutase (432 aa).

Lys265 carries the N6-(pyridoxal phosphate)lysine modification.

The protein belongs to the class-III pyridoxal-phosphate-dependent aminotransferase family. HemL subfamily. Homodimer. Pyridoxal 5'-phosphate serves as cofactor.

The protein resides in the cytoplasm. It carries out the reaction (S)-4-amino-5-oxopentanoate = 5-aminolevulinate. It participates in porphyrin-containing compound metabolism; protoporphyrin-IX biosynthesis; 5-aminolevulinate from L-glutamyl-tRNA(Glu): step 2/2. This is Glutamate-1-semialdehyde 2,1-aminomutase from Histophilus somni (strain 2336) (Haemophilus somnus).